A 615-amino-acid chain; its full sequence is DNA mismatch repair protein MutL (615 aa).

The disordered stretch occupies residues 363 to 397 (FAEPAAREPVAPRYTPAPASGSRPAAPWPNAQPGY). The span at 364 to 391 (AEPAAREPVAPRYTPAPASGSRPAAPWP) shows a compositional bias: low complexity.

Belongs to the DNA mismatch repair MutL/HexB family.

Functionally, this protein is involved in the repair of mismatches in DNA. It is required for dam-dependent methyl-directed DNA mismatch repair. May act as a 'molecular matchmaker', a protein that promotes the formation of a stable complex between two or more DNA-binding proteins in an ATP-dependent manner without itself being part of a final effector complex. This is DNA mismatch repair protein MutL from Escherichia coli O8 (strain IAI1).